We begin with the raw amino-acid sequence, 192 residues long: Adenylate kinase (192 aa).

10–18 is an ATP binding site; it reads GVPGVGGTT.

It belongs to the archaeal adenylate kinase family. Monomer.

The protein resides in the cytoplasm. The enzyme catalyses AMP + ATP = 2 ADP. The sequence is that of Adenylate kinase from Methanococcus maripaludis (strain C7 / ATCC BAA-1331).